The chain runs to 1141 residues: Probable ubiquitin carboxyl-terminal hydrolase 2 (1141 aa).

The residue at position 112 (T112) is a Phosphothreonine. S113 is subject to Phosphoserine. A Phosphothreonine modification is found at T115. The USP domain occupies 614–1124 (IGLENTGNLC…NPYMLTYIRK (511 aa)). The active-site Nucleophile is C623. T721 carries the phosphothreonine modification. The residue at position 722 (S722) is a Phosphoserine. A disordered region spans residues 748 to 770 (EEQAQGLEQEQGQDEAKSPAEQS). H1076 (proton acceptor) is an active-site residue.

The protein belongs to the peptidase C19 family.

It catalyses the reaction Thiol-dependent hydrolysis of ester, thioester, amide, peptide and isopeptide bonds formed by the C-terminal Gly of ubiquitin (a 76-residue protein attached to proteins as an intracellular targeting signal).. The sequence is that of Probable ubiquitin carboxyl-terminal hydrolase 2 (ubp2) from Schizosaccharomyces pombe (strain 972 / ATCC 24843) (Fission yeast).